Consider the following 130-residue polypeptide: Small ribosomal subunit protein uS9 (130 aa).

Belongs to the universal ribosomal protein uS9 family.

This is Small ribosomal subunit protein uS9 from Desulfosudis oleivorans (strain DSM 6200 / JCM 39069 / Hxd3) (Desulfococcus oleovorans).